The following is a 510-amino-acid chain: Anaerobic nitric oxide reductase transcription regulator NorR (510 aa).

The Sigma-54 factor interaction domain maps to 188–417 (IIGNSQGMRT…LEHVIKRAAV (230 aa)). ATP is bound by residues 216–223 (GETGVGKE) and 279–288 (ADGGTLFLDE). The segment at residues 486–505 (WAATARQLELDSGNLHRLAK) is a DNA-binding region (H-T-H motif).

Its pathway is nitrogen metabolism; nitric oxide reduction. Functionally, required for the expression of anaerobic nitric oxide (NO) reductase, acts as a transcriptional activator for at least the norVW operon. Activation also requires sigma-54. The sequence is that of Anaerobic nitric oxide reductase transcription regulator NorR from Vibrio vulnificus (strain CMCP6).